We begin with the raw amino-acid sequence, 90 residues long: Small ribosomal subunit protein uS15 (90 aa).

The protein belongs to the universal ribosomal protein uS15 family. Part of the 30S ribosomal subunit. Forms a bridge to the 50S subunit in the 70S ribosome, contacting the 23S rRNA.

Functionally, one of the primary rRNA binding proteins, it binds directly to 16S rRNA where it helps nucleate assembly of the platform of the 30S subunit by binding and bridging several RNA helices of the 16S rRNA. In terms of biological role, forms an intersubunit bridge (bridge B4) with the 23S rRNA of the 50S subunit in the ribosome. The polypeptide is Small ribosomal subunit protein uS15 (Campylobacter hominis (strain ATCC BAA-381 / DSM 21671 / CCUG 45161 / LMG 19568 / NCTC 13146 / CH001A)).